The following is a 348-amino-acid chain: GTPase Obg (348 aa).

Residues Met-1–Ile-159 form the Obg domain. Residues Ala-160 to Asp-327 form the OBG-type G domain. Residues Gly-166–Ser-173, Phe-191–His-195, Asp-212–Gly-215, Asn-279–Asp-282, and Ser-308–Val-310 each bind GTP. Mg(2+) is bound by residues Ser-173 and Thr-193.

The protein belongs to the TRAFAC class OBG-HflX-like GTPase superfamily. OBG GTPase family. Monomer. Mg(2+) is required as a cofactor.

It localises to the cytoplasm. Its function is as follows. An essential GTPase which binds GTP, GDP and possibly (p)ppGpp with moderate affinity, with high nucleotide exchange rates and a fairly low GTP hydrolysis rate. Plays a role in control of the cell cycle, stress response, ribosome biogenesis and in those bacteria that undergo differentiation, in morphogenesis control. This is GTPase Obg from Ruegeria sp. (strain TM1040) (Silicibacter sp.).